The following is a 710-amino-acid chain: MVMACRVVNKRRHMGLQQLSSFAETGRTFLGPLKSSKFIIDEECHESVLISSTVRLLESLDLTSAVGQLLNEAVQAQNNTYRTGISTLLFLVGAWSSAVEECLHLGVPISIIVSVMSEGLNFCSEEVVSLHVPVHNIFDCMDSTKTFSQLETFSVSLCPFLQVPSDTDLIEELHGLKDVASQTLTISNLSGRPLKSYELFKPQTKVEADNNTSRTLKNSLLADTCCRQSILIHSRHFNRTDNTEGVSKPDGFQEHVTATHKTYRCNDLVELAVGLSHGDHSSMKLVEEAVQLQYQNACVQQGNCTKPFMFDISRIFTCCLPGLPETSSCVCPGYITVVSVSNNPVIKELQNQPVRIVLIEGDLTENYRHLGFNKSANIKTVLDSMQLQEDSSEELWANHVLQVLIQFKVNLVLVQGNVSERLIEKCINSKRLVIGSVNGSVMQAFAEAAGAVQVAYITQVNEDCVGDGVCVTFWRSSPLDVVDRNSRIAILLKTEGINLVTAVLTNPVTAQMQIKEDRFWTCAYRLYYALKEEKVFLGGGAVEFLCLSCLHILAEQSLKKENHACSGWLHNTSSWLASSLAIYRPTVLKFLANGWQKYLSTLLYNTANYSSEFEASTYIQHHLQNATDSGSPSSYILNEYSKLNSRIFNSDISNKLEQIPRVYDVVTPKIEAWRRALDLVLLALQTDSEIITGHGHTQRNSQELTGFLFL.

This sequence belongs to the TCP-1 chaperonin family. BBS12 subfamily. Component of the chaperonin-containing T-complex (TRiC), a heterooligomeric complex of about 850 to 900 kDa that forms two stacked rings, 12 to 16 nm in diameter. Interacts with MKKS.

The protein localises to the cell projection. Its subcellular location is the cilium. Component of the chaperonin-containing T-complex (TRiC), a molecular chaperone complex that assists the folding of proteins upon ATP hydrolysis. As part of the TRiC complex may play a role in the assembly of BBSome, a complex involved in ciliogenesis regulating transports vesicles to the cilia. Involved in adipogenic differentiation. The sequence is that of Chaperonin-containing T-complex member BBS12 (BBS12) from Pongo abelii (Sumatran orangutan).